The sequence spans 404 residues: Starvation-sensing protein RspA (404 aa).

This sequence belongs to the mandelate racemase/muconate lactonizing enzyme family.

Probably involved in the degradation of homoserine lactone (HSL) or of a metabolite of HSL that signals starvation. The chain is Starvation-sensing protein RspA from Escherichia coli (strain K12).